A 143-amino-acid chain; its full sequence is Ribosome-binding factor A (143 aa).

The disordered stretch occupies residues 123 to 143; sequence VRAQAAQAKPAGEANPYKERN. Positions 124–136 are enriched in low complexity; sequence RAQAAQAKPAGEA.

This sequence belongs to the RbfA family. Monomer. Binds 30S ribosomal subunits, but not 50S ribosomal subunits or 70S ribosomes.

It is found in the cytoplasm. Its function is as follows. One of several proteins that assist in the late maturation steps of the functional core of the 30S ribosomal subunit. Associates with free 30S ribosomal subunits (but not with 30S subunits that are part of 70S ribosomes or polysomes). Required for efficient processing of 16S rRNA. May interact with the 5'-terminal helix region of 16S rRNA. The polypeptide is Ribosome-binding factor A (Corynebacterium urealyticum (strain ATCC 43042 / DSM 7109)).